The sequence spans 593 residues: MLRVSAFRLLGRRGASRVSLLEDFSFRYYSSGPLGVRDDTRDSRAYFTTPIFYVNAAPHIGHLYSALLADALCRHHRLRVPSDAATGFSTGTDEHGLKIQQAAAAAGLAPSELCDRVSAQFQQLFREADISSTDFIRTTEARHRIAVQHFWGMLKSRGLLYKGLYEGWYCASDECFLPEAKVTRQPGPSGDLCPVSLESGHPVSWTKEENYIFRLSQFREPLQQWLRGDPQAITPEPFHHTVLQWLEEELPDLSVSRRSSHLHWGIPVPGDDSQTIYVWLDALVNYLTVVGYPDAEFKSWWPNTSHIIGKDILKFHAIYWPALLLGAGMSPPHRIYVHSHWTVCGQKMSKSLGNVVDPRTCLDRYTVDGFRYFLLRQGVPSWDCDYYDEKVVKLLDSELADALGGLLNRCTANKINPSGIYPAFCATCFPSEPGLVGPSGRAQAEDYALVSAVATLPKQVADHYDNFQIYKALEAVSSCVRQTNGFVQRHAPWKLNWESPVDAPWLGTVLHVALECLRVFGTLLQPVTPSLADRLLSRLGVSSTERSLGELHFLSRFYGHPSPFEGRRLGPETGVLFPRLDQSRSWLVKAHKT.

A mitochondrion-targeting transit peptide spans 1 to 29 (MLRVSAFRLLGRRGASRVSLLEDFSFRYY). Positions 52-62 (FYVNAAPHIGH) match the 'HIGH' region motif. The 'KMSKS' region signature appears at 347-351 (KMSKS). Lys-350 serves as a coordination point for ATP.

This sequence belongs to the class-I aminoacyl-tRNA synthetase family.

It localises to the mitochondrion matrix. It catalyses the reaction tRNA(Met) + L-methionine + ATP = L-methionyl-tRNA(Met) + AMP + diphosphate. In Bos taurus (Bovine), this protein is Methionine--tRNA ligase, mitochondrial (MARS2).